Reading from the N-terminus, the 360-residue chain is S-adenosylmethionine:tRNA ribosyltransferase-isomerase (360 aa).

Belongs to the QueA family. Monomer.

Its subcellular location is the cytoplasm. It carries out the reaction 7-aminomethyl-7-carbaguanosine(34) in tRNA + S-adenosyl-L-methionine = epoxyqueuosine(34) in tRNA + adenine + L-methionine + 2 H(+). Its pathway is tRNA modification; tRNA-queuosine biosynthesis. In terms of biological role, transfers and isomerizes the ribose moiety from AdoMet to the 7-aminomethyl group of 7-deazaguanine (preQ1-tRNA) to give epoxyqueuosine (oQ-tRNA). The sequence is that of S-adenosylmethionine:tRNA ribosyltransferase-isomerase from Burkholderia mallei (strain NCTC 10247).